Reading from the N-terminus, the 143-residue chain is Ribosome-binding factor A (143 aa).

A disordered region spans residues 123-143 (DKSLQENYKQNDKETKAEKLR).

Belongs to the RbfA family. As to quaternary structure, monomer. Binds 30S ribosomal subunits, but not 50S ribosomal subunits or 70S ribosomes.

Its subcellular location is the cytoplasm. Functionally, one of several proteins that assist in the late maturation steps of the functional core of the 30S ribosomal subunit. Associates with free 30S ribosomal subunits (but not with 30S subunits that are part of 70S ribosomes or polysomes). Required for efficient processing of 16S rRNA. May interact with the 5'-terminal helix region of 16S rRNA. The sequence is that of Ribosome-binding factor A from Francisella tularensis subsp. mediasiatica (strain FSC147).